Here is a 124-residue protein sequence, read N- to C-terminus: Large ribosomal subunit protein uL22c (124 aa).

Belongs to the universal ribosomal protein uL22 family. As to quaternary structure, part of the 50S ribosomal subunit.

It localises to the plastid. It is found in the chloroplast. This protein binds specifically to 23S rRNA. Its function is as follows. The globular domain of the protein is located near the polypeptide exit tunnel on the outside of the subunit, while an extended beta-hairpin is found that lines the wall of the exit tunnel in the center of the 70S ribosome. In Amborella trichopoda, this protein is Large ribosomal subunit protein uL22c (rpl22).